Consider the following 90-residue polypeptide: Small ribosomal subunit protein uS15c (90 aa).

The protein belongs to the universal ribosomal protein uS15 family. As to quaternary structure, part of the 30S ribosomal subunit.

Its subcellular location is the plastid. The protein localises to the chloroplast. The protein is Small ribosomal subunit protein uS15c (rps15) of Gossypium barbadense (Sea Island cotton).